We begin with the raw amino-acid sequence, 555 residues long: 2-isopropylmalate synthase (555 aa).

In terms of domain architecture, Pyruvate carboxyltransferase spans 30–303 (PIWCSVDLRD…DPGLDCTDIN (274 aa)). 4 residues coordinate Mg(2+): Asp-39, His-242, His-244, and Asn-278. The tract at residues 437-555 (QPDARIKFVD…VSAANRVIAK (119 aa)) is regulatory domain.

The protein belongs to the alpha-IPM synthase/homocitrate synthase family. LeuA type 2 subfamily. As to quaternary structure, homodimer. Mg(2+) is required as a cofactor.

The protein resides in the cytoplasm. The enzyme catalyses 3-methyl-2-oxobutanoate + acetyl-CoA + H2O = (2S)-2-isopropylmalate + CoA + H(+). It participates in amino-acid biosynthesis; L-leucine biosynthesis; L-leucine from 3-methyl-2-oxobutanoate: step 1/4. Catalyzes the condensation of the acetyl group of acetyl-CoA with 3-methyl-2-oxobutanoate (2-ketoisovalerate) to form 3-carboxy-3-hydroxy-4-methylpentanoate (2-isopropylmalate). This Brucella suis biovar 1 (strain 1330) protein is 2-isopropylmalate synthase.